A 121-amino-acid polypeptide reads, in one-letter code: Large ribosomal subunit protein bL12 (121 aa).

This sequence belongs to the bacterial ribosomal protein bL12 family. In terms of assembly, homodimer. Part of the ribosomal stalk of the 50S ribosomal subunit. Forms a multimeric L10(L12)X complex, where L10 forms an elongated spine to which 2 to 4 L12 dimers bind in a sequential fashion. Binds GTP-bound translation factors.

In terms of biological role, forms part of the ribosomal stalk which helps the ribosome interact with GTP-bound translation factors. Is thus essential for accurate translation. The protein is Large ribosomal subunit protein bL12 of Clostridium novyi (strain NT).